Here is a 467-residue protein sequence, read N- to C-terminus: ATP synthase subunit beta (467 aa).

An ATP-binding site is contributed by 150-157 (GGAGVGKT).

It belongs to the ATPase alpha/beta chains family. In terms of assembly, F-type ATPases have 2 components, CF(1) - the catalytic core - and CF(0) - the membrane proton channel. CF(1) has five subunits: alpha(3), beta(3), gamma(1), delta(1), epsilon(1). CF(0) has three main subunits: a(1), b(2) and c(9-12). The alpha and beta chains form an alternating ring which encloses part of the gamma chain. CF(1) is attached to CF(0) by a central stalk formed by the gamma and epsilon chains, while a peripheral stalk is formed by the delta and b chains.

Its subcellular location is the cell inner membrane. It catalyses the reaction ATP + H2O + 4 H(+)(in) = ADP + phosphate + 5 H(+)(out). Produces ATP from ADP in the presence of a proton gradient across the membrane. The catalytic sites are hosted primarily by the beta subunits. The protein is ATP synthase subunit beta of Aliivibrio fischeri (strain ATCC 700601 / ES114) (Vibrio fischeri).